The sequence spans 359 residues: 3-dehydroquinate synthase (359 aa).

Residues Asp71–Lys76, Gly105–Asp109, Thr129–Thr130, Lys142, Lys151, and Cys169–Thr172 each bind NAD(+). Positions 184, 247, and 264 each coordinate Zn(2+).

It belongs to the sugar phosphate cyclases superfamily. Dehydroquinate synthase family. Co(2+) is required as a cofactor. It depends on Zn(2+) as a cofactor. The cofactor is NAD(+).

The protein resides in the cytoplasm. It carries out the reaction 7-phospho-2-dehydro-3-deoxy-D-arabino-heptonate = 3-dehydroquinate + phosphate. The protein operates within metabolic intermediate biosynthesis; chorismate biosynthesis; chorismate from D-erythrose 4-phosphate and phosphoenolpyruvate: step 2/7. Catalyzes the conversion of 3-deoxy-D-arabino-heptulosonate 7-phosphate (DAHP) to dehydroquinate (DHQ). This chain is 3-dehydroquinate synthase, found in Shewanella pealeana (strain ATCC 700345 / ANG-SQ1).